Here is a 61-residue protein sequence, read N- to C-terminus: Small ribosomal subunit protein uS14 (61 aa).

Positions 24, 27, 40, and 43 each coordinate Zn(2+).

It belongs to the universal ribosomal protein uS14 family. Zinc-binding uS14 subfamily. In terms of assembly, part of the 30S ribosomal subunit. Contacts proteins S3 and S10. Requires Zn(2+) as cofactor.

Functionally, binds 16S rRNA, required for the assembly of 30S particles and may also be responsible for determining the conformation of the 16S rRNA at the A site. This is Small ribosomal subunit protein uS14 from Sulfurovum sp. (strain NBC37-1).